The chain runs to 258 residues: Triosephosphate isomerase (258 aa).

11-13 (NWK) contacts substrate. His-101 functions as the Electrophile in the catalytic mechanism. Glu-173 functions as the Proton acceptor in the catalytic mechanism. Residues Gly-179, Ser-219, and 240–241 (GG) each bind substrate.

Belongs to the triosephosphate isomerase family. In terms of assembly, homodimer.

The protein resides in the cytoplasm. The enzyme catalyses D-glyceraldehyde 3-phosphate = dihydroxyacetone phosphate. Its pathway is carbohydrate biosynthesis; gluconeogenesis. It functions in the pathway carbohydrate degradation; glycolysis; D-glyceraldehyde 3-phosphate from glycerone phosphate: step 1/1. Involved in the gluconeogenesis. Catalyzes stereospecifically the conversion of dihydroxyacetone phosphate (DHAP) to D-glyceraldehyde-3-phosphate (G3P). This is Triosephosphate isomerase from Streptomyces avermitilis (strain ATCC 31267 / DSM 46492 / JCM 5070 / NBRC 14893 / NCIMB 12804 / NRRL 8165 / MA-4680).